We begin with the raw amino-acid sequence, 289 residues long: Aquaporin PIP2-3 (289 aa).

The segment at 1–25 is disordered; that stretch reads MAKQDIEASGPEAGEFSAKDYTDPP. Helical transmembrane passes span 43–63 and 80–100; these read AVIA…ATVI and CGGV…FILV. An NPA 1 motif is present at residues 112-114; the sequence is NPA. 3 consecutive transmembrane segments (helical) span residues 131-151, 173-193, and 207-227; these read LLYI…VKGF, GTGL…VFSA, and VLAP…TIPI. The short motif at 233-235 is the NPA 2 element; that stretch reads NPA. The chain crosses the membrane as a helical span at residues 255-275; that stretch reads IFWVGPLIGAAIAAAYHQYVL.

It belongs to the MIP/aquaporin (TC 1.A.8) family. PIP (TC 1.A.8.11) subfamily.

It localises to the cell membrane. In terms of biological role, aquaporins facilitate the transport of water and small neutral solutes across cell membranes. This Zea mays (Maize) protein is Aquaporin PIP2-3 (PIP2-3).